An 81-amino-acid polypeptide reads, in one-letter code: Acyl carrier protein 2 (81 aa).

A Carrier domain is found at 1–79; that stretch reads MTETEILERI…DVIGAVQSLL (79 aa). Position 39 is an O-(pantetheine 4'-phosphoryl)serine (Ser39).

This sequence belongs to the acyl carrier protein (ACP) family. In terms of processing, 4'-phosphopantetheine is transferred from CoA to a specific serine of apo-ACP by AcpS. This modification is essential for activity because fatty acids are bound in thioester linkage to the sulfhydryl of the prosthetic group.

The protein localises to the cytoplasm. It functions in the pathway lipid metabolism; fatty acid biosynthesis. In terms of biological role, carrier of the growing fatty acid chain in fatty acid biosynthesis. The chain is Acyl carrier protein 2 from Ralstonia nicotianae (strain ATCC BAA-1114 / GMI1000) (Ralstonia solanacearum).